Reading from the N-terminus, the 290-residue chain is Arylamine N-acetyltransferase 2 (290 aa).

Residue Cys-68 is the Acyl-thioester intermediate of the active site. 2 residues coordinate CoA: Ser-103 and Gly-104. Residue 106 to 107 (IH) participates in substrate binding. Catalysis depends on residues His-107 and Asp-122. Tyr-208 provides a ligand contact to CoA.

It belongs to the arylamine N-acetyltransferase family.

The protein localises to the cytoplasm. The catalysed reaction is an arylamine + acetyl-CoA = an N-acetylarylamine + CoA. It carries out the reaction an N-hydroxyarylamine + acetyl-CoA = an N-acetoxyarylamine + CoA. Functionally, catalyzes the N- or O-acetylation of various arylamine and heterocyclic amine substrates, and participates in the detoxification of a plethora of hydrazine and arylamine drugs. In Mus musculus (Mouse), this protein is Arylamine N-acetyltransferase 2 (Nat2).